The chain runs to 126 residues: uncharacterized protein (126 aa).

It belongs to the SufE family.

This is an uncharacterized protein from Haemophilus influenzae (strain ATCC 51907 / DSM 11121 / KW20 / Rd).